The chain runs to 251 residues: Prothoracicostatic peptides (251 aa).

The interval 1-22 (MRKSARGQVCTEAGAGASGDWQ) is disordered. Residues 1 to 77 (MRKSARGQVC…GWQDLNSAWG (77 aa)) constitute a propeptide that is removed on maturation. Residue Trp89 is modified to Tryptophan amide. Residues 93-138 (GWNDMSSAWGKRGWNDMSSAWGKRGWNDMSSAWGKRGWNDMSSAWG) constitute a propeptide that is removed on maturation. At Trp152 the chain carries Tryptophan amide. A propeptide spanning residues 156-187 (AAEPDYEEIDAAIEQLIPIQQLSDNERMEVPE) is cleaved from the precursor. 2 positions are modified to tryptophan amide: Trp198 and Trp228. A disordered region spans residues 227-251 (MWGKRSAPDADAVDDDHESSARDEA).

As to expression, prothoracicostatic peptide 5: Expressed in antennal lobe (AL), corpora cardiaca (CC), corpora allata (CA) and gnathal ganglion (GNG) (at protein level). Expression in AL detected in all animals, in CC, CA and GNG in most (at protein level). Prothoracicostatic peptide 6: Expressed in antennal lobe (AL), corpora cardiaca (CC), corpora allata (CA) and gnathal ganglion (GNG) (at protein level). Expression in AL detected in all animals, expression in GNG in most animals, in CA and CC detected in some animals (at protein level). Prothoracicostatic peptide 7: Expressed in antennal lobe (AL), corpora cardiaca (CC), corpora allata (CA) and gnathal ganglion (GNG) (at protein level). Expression in AL, CA and CC detected in most animals, expression in GNG in some animals (at protein level). Prothoracicostatic peptide precursor-related peptide 2: Expressed in antennal lobe (AL), corpora cardiaca (CC) and corpora allata (CA) with expression detected in few animals (at protein level). Not expressed in gnathal ganglion (GNG) (at protein level). Prothoracicostatic peptide 8: Expressed in antennal lobe (AL), corpora cardiaca (CC), corpora allata (CA) and gnathal ganglion (GNG) (at protein level). Expression in AL detected in all animals, expression in GNG in most animals, in CA and CC detected in some animals (at protein level). Prothoracicostatic peptide precursor-related peptide 3: Expressed in antennal lobe (AL) in few animals (at protein level). Not expressed in corpora cardiaca (CC), corpora allata (CA) and gnathal ganglion (GNG) (at protein level).

It is found in the secreted. The sequence is that of Prothoracicostatic peptides from Agrotis ipsilon (Black cutworm moth).